We begin with the raw amino-acid sequence, 218 residues long: Probable transaldolase (218 aa).

The active-site Schiff-base intermediate with substrate is K83.

This sequence belongs to the transaldolase family. Type 3B subfamily.

It localises to the cytoplasm. The enzyme catalyses D-sedoheptulose 7-phosphate + D-glyceraldehyde 3-phosphate = D-erythrose 4-phosphate + beta-D-fructose 6-phosphate. It participates in carbohydrate degradation; pentose phosphate pathway; D-glyceraldehyde 3-phosphate and beta-D-fructose 6-phosphate from D-ribose 5-phosphate and D-xylulose 5-phosphate (non-oxidative stage): step 2/3. Its function is as follows. Transaldolase is important for the balance of metabolites in the pentose-phosphate pathway. The chain is Probable transaldolase (tal) from Mesorhizobium japonicum (strain LMG 29417 / CECT 9101 / MAFF 303099) (Mesorhizobium loti (strain MAFF 303099)).